We begin with the raw amino-acid sequence, 258 residues long: UPF0246 protein CJA_0191 (258 aa).

This sequence belongs to the UPF0246 family.

This is UPF0246 protein CJA_0191 from Cellvibrio japonicus (strain Ueda107) (Pseudomonas fluorescens subsp. cellulosa).